Reading from the N-terminus, the 778-residue chain is Ent-trachylobane synthase KSL2, chloroplastic (778 aa).

Residues 1–37 (MLLTCTNSLKISSQAKEWESKTLTGMSLEQLNKRIRI) constitute a chloroplast transit peptide. D529, D533, N672, D673, and D680 together coordinate Mg(2+). The DDXXD motif motif lies at 529 to 533 (DDFFD).

Belongs to the terpene synthase family. The cofactor is Mg(2+).

The protein resides in the plastid. The protein localises to the chloroplast. It catalyses the reaction ent-copalyl diphosphate = ent-trachylobane + diphosphate. It carries out the reaction ent-copalyl diphosphate = ent-kaur-16-ene + diphosphate. The protein operates within secondary metabolite biosynthesis; terpenoid biosynthesis. Its function is as follows. Diterpene cyclase involved in the biosynthesis of labdane-related diterpenoids (LRDs) natural products. Catalyzes the cyclization of ent-CDP into ent-trachylobane as a major and ent-kaurene as a minor product. The sequence is that of Ent-trachylobane synthase KSL2, chloroplastic from Ricinus communis (Castor bean).